A 475-amino-acid polypeptide reads, in one-letter code: Putative F-box protein At3g58960 (475 aa).

Positions 1-49 (MDRISSLSNDIISNIVSFLSAKDAAVASVLSKRWQNIYTIVPNLEFDNT) constitute an F-box domain.

The chain is Putative F-box protein At3g58960 from Arabidopsis thaliana (Mouse-ear cress).